The chain runs to 301 residues: 3-methyl-2-oxobutanoate hydroxymethyltransferase (301 aa).

A compositionally biased stretch (low complexity) spans M1–A28. Residues M1–P37 form a disordered region. D82 and D121 together coordinate Mg(2+). Residues D82–S83, D121, and K151 each bind 3-methyl-2-oxobutanoate. Mg(2+) is bound at residue E153. Catalysis depends on E219, which acts as the Proton acceptor.

The protein belongs to the PanB family. As to quaternary structure, homodecamer; pentamer of dimers. It depends on Mg(2+) as a cofactor.

Its subcellular location is the cytoplasm. It carries out the reaction 3-methyl-2-oxobutanoate + (6R)-5,10-methylene-5,6,7,8-tetrahydrofolate + H2O = 2-dehydropantoate + (6S)-5,6,7,8-tetrahydrofolate. It participates in cofactor biosynthesis; (R)-pantothenate biosynthesis; (R)-pantoate from 3-methyl-2-oxobutanoate: step 1/2. Functionally, catalyzes the reversible reaction in which hydroxymethyl group from 5,10-methylenetetrahydrofolate is transferred onto alpha-ketoisovalerate to form ketopantoate. The sequence is that of 3-methyl-2-oxobutanoate hydroxymethyltransferase from Arthrobacter sp. (strain FB24).